Here is a 362-residue protein sequence, read N- to C-terminus: Atypical chemokine receptor 3 (362 aa).

Over 1–47 (MDVHLFDYVEPGNYSDINWPCNSSDCIVVDTVQCPAMPNKNVLLYTL) the chain is Extracellular. N13 and N22 each carry an N-linked (GlcNAc...) asparagine glycan. Residues 48 to 68 (SFIYIFIFVIGMIANSVVVWV) form a helical membrane-spanning segment. Residues 69–81 (NIQAKTTGYDTHC) lie on the Cytoplasmic side of the membrane. The chain crosses the membrane as a helical span at residues 82 to 102 (YILNLAIADLWVVITIPVWVV). The Extracellular segment spans residues 103 to 118 (SLVQHNQWPMGELTCK). C117 and C196 are joined by a disulfide. The chain crosses the membrane as a helical span at residues 119–139 (ITHLIFSINLFGSIFFLACMS). At 140–162 (VDRYLSITYFTSTSSYKKKMVRR) the chain is on the cytoplasmic side. The chain crosses the membrane as a helical span at residues 163 to 183 (VVCVLVWLLAFFVSLPDTYYL). Residues 184–213 (KTVTSASNNETYCRSFYPEHSIKEWLIGME) lie on the Extracellular side of the membrane. Residues 214–234 (LVSVILGFAVPFTIIAIFYFL) form a helical membrane-spanning segment. At 235–252 (LARAMSASGDQEKHSSRK) the chain is on the cytoplasmic side. A helical membrane pass occupies residues 253-273 (IIFSYVVVFLVCWLPYHFVVL). At 274 to 296 (LDIFSILHYIPFTCQLENVLFTA) the chain is on the extracellular side. The helical transmembrane segment at 297-319 (LHVTQCLSLVHCCVNPVLYSFIN) threads the bilayer. Residues 320–362 (RNYRYELMKAFIFKYSAKTGLTKLIDASRVSETEYSALEQNTK) are Cytoplasmic-facing. Positions 324–362 (YELMKAFIFKYSAKTGLTKLIDASRVSETEYSALEQNTK) are C-terminal cytoplasmic tail. 3 positions are modified to phosphoserine: S347, S350, and S355.

The protein belongs to the G-protein coupled receptor 1 family. Atypical chemokine receptor subfamily. Homodimer. Can form heterodimers with CXCR4; heterodimerization may regulate CXCR4 signaling activity. Interacts with ARRB1 and ARRB2. The Ser/Thr residues in the C-terminal cytoplasmic tail may be phosphorylated. Post-translationally, ubiquitinated at the Lys residues in its C-terminal cytoplasmic tail and is essential for correct trafficking from and to the cell membrane. Deubiquitinated by CXCL12-stimulation in a reversible manner. As to expression, expressed in vascular smooth muscle cells (at protein level). In brain, expressed in blood vessels, pyramidal cells in hippocampal subfield CA3, mature dentate gyrus granule cells, ventricle walls, olfactory bulb, accumbens shell, supraoptic, lateroanterior and ventromedial hypothalamic nuclei, medial region of thalamus, and motor nuclei, central gray and raphe magnus nucleus of brain stem. Detected in primary neurons, GABAergic neurons, astrocytes, cerebral cortex, ventral striatum and choroid plexus. Not detected in mesencephalon.

It is found in the cell membrane. Its subcellular location is the early endosome. The protein resides in the recycling endosome. Atypical chemokine receptor that controls chemokine levels and localization via high-affinity chemokine binding that is uncoupled from classic ligand-driven signal transduction cascades, resulting instead in chemokine sequestration, degradation, or transcytosis. Also known as interceptor (internalizing receptor) or chemokine-scavenging receptor or chemokine decoy receptor. Acts as a receptor for chemokines CXCL11 and CXCL12/SDF1. Chemokine binding does not activate G-protein-mediated signal transduction but instead induces beta-arrestin recruitment, leading to ligand internalization and activation of MAPK signaling pathway. Required for regulation of CXCR4 protein levels in migrating interneurons, thereby adapting their chemokine responsiveness. In glioma cells, transduces signals via MEK/ERK pathway, mediating resistance to apoptosis. Promotes cell growth and survival. Not involved in cell migration, adhesion or proliferation of normal hematopoietic progenitors but activated by CXCL11 in malignant hemapoietic cells, leading to phosphorylation of ERK1/2 (MAPK3/MAPK1) and enhanced cell adhesion and migration. Plays a regulatory role in CXCR4-mediated activation of cell surface integrins by CXCL12. Required for heart valve development. In terms of biological role, atypical chemokine receptor that controls chemokine levels and localization via high-affinity chemokine binding that is uncoupled from classic ligand-driven signal transduction cascades, resulting instead in chemokine sequestration, degradation, or transcytosis. Also known as interceptor (internalizing receptor) or chemokine-scavenging receptor or chemokine decoy receptor. Acts as a receptor for chemokines CXCL11 and CXCL12/SDF1. Chemokine binding does not activate G-protein-mediated signal transduction but instead induces beta-arrestin recruitment, leading to ligand internalization and activation of MAPK signaling pathway. Required for regulation of CXCR4 protein levels in migrating interneurons, thereby adapting their chemokine responsiveness. In glioma cells, transduces signals via MEK/ERK pathway, mediating resistance to apoptosis. Promotes cell growth and survival. Not involved in cell migration, adhesion or proliferation of normal hematopoietic progenitors but activated by CXCL11 in malignant hemapoietic cells, leading to phosphorylation of ERK1/2 (MAPK3/MAPK1) and enhanced cell adhesion and migration. Plays a regulatory role in CXCR4-mediated activation of cell surface integrins by CXCL12. Required for heart valve development. Regulates axon guidance in the oculomotor system through the regulation of CXCL12 levels. The protein is Atypical chemokine receptor 3 of Rattus norvegicus (Rat).